The sequence spans 214 residues: MMLIIRYGLLNFETSWVHQKTMVFIQIRKRQKKKLSIYLKHPQVYTLGHRANKEYISFCSNNTLVNLHRVDRGGEVTYHDYGQVIIYNITHLQKINRNVNIYIANLEQLGKRILLLYKTKSTKKEKFPGIWIQQKKIVALGIKIIQRTTFHGLSINFSCSKRNYELILACGIKDGISVNFNEIHKKNSQNQFYWKYKIVLLIVDILAFNNIISF.

One can recognise a BPL/LPL catalytic domain in the interval 30–214; it reads RQKKKLSIYL…ILAFNNIISF (185 aa). Substrate is bound by residues 72–79, 139–141, and 152–154; these read RGGEVTYH, ALG, and GLS. The active-site Acyl-thioester intermediate is Cys-170.

Belongs to the LipB family.

It localises to the plastid. Its subcellular location is the chloroplast. The enzyme catalyses octanoyl-[ACP] + L-lysyl-[protein] = N(6)-octanoyl-L-lysyl-[protein] + holo-[ACP] + H(+). It functions in the pathway protein modification; protein lipoylation via endogenous pathway; protein N(6)-(lipoyl)lysine from octanoyl-[acyl-carrier-protein]: step 1/2. Catalyzes the transfer of endogenously produced octanoic acid from octanoyl-acyl-carrier-protein onto the lipoyl domains of lipoate-dependent enzymes. Lipoyl-ACP can also act as a substrate although octanoyl-ACP is likely to be the physiological substrate. The polypeptide is Probable octanoyltransferase (lipB) (Cyanidium caldarium (Red alga)).